The sequence spans 96 residues: DNA-directed RNA polymerase subunit Rpo11 (96 aa).

This sequence belongs to the archaeal Rpo11/eukaryotic RPB11/RPC19 RNA polymerase subunit family. Part of the RNA polymerase complex.

Its subcellular location is the cytoplasm. The enzyme catalyses RNA(n) + a ribonucleoside 5'-triphosphate = RNA(n+1) + diphosphate. Functionally, DNA-dependent RNA polymerase (RNAP) catalyzes the transcription of DNA into RNA using the four ribonucleoside triphosphates as substrates. The protein is DNA-directed RNA polymerase subunit Rpo11 of Methanococcus maripaludis (strain DSM 14266 / JCM 13030 / NBRC 101832 / S2 / LL).